A 122-amino-acid polypeptide reads, in one-letter code: Large ribosomal subunit protein uL14 (122 aa).

It belongs to the universal ribosomal protein uL14 family. As to quaternary structure, part of the 50S ribosomal subunit. Forms a cluster with proteins L3 and L19. In the 70S ribosome, L14 and L19 interact and together make contacts with the 16S rRNA in bridges B5 and B8.

Binds to 23S rRNA. Forms part of two intersubunit bridges in the 70S ribosome. This Nostoc punctiforme (strain ATCC 29133 / PCC 73102) protein is Large ribosomal subunit protein uL14.